Here is a 145-residue protein sequence, read N- to C-terminus: Small ribosomal subunit protein uS15 (145 aa).

It belongs to the universal ribosomal protein uS15 family. In terms of assembly, part of the 30S ribosomal subunit.

This Thermoplasma acidophilum (strain ATCC 25905 / DSM 1728 / JCM 9062 / NBRC 15155 / AMRC-C165) protein is Small ribosomal subunit protein uS15.